Consider the following 671-residue polypeptide: Transcription factor xilB (671 aa).

Residues 11 to 46 (CHSCYTRKQKASESDSICDRQYPCNHCTRRRRPEEC) constitute a DNA-binding region (zn(2)-C6 fungal-type). Positions 48–90 (YGPPPVKVPSCPPVPADQSETQPRPVESARPTRETPVDDSEAH) are disordered. The segment covering 49–62 (GPPPVKVPSCPPVP) has biased composition (pro residues). The span at 77-90 (RPTRETPVDDSEAH) shows a compositional bias: basic and acidic residues. Residues 148 to 593 (PERQIIDFLV…ATLLFARSVQ (446 aa)) form a fungal transcription factor domain region. The segment at 629 to 650 (WPSLEAGDPYSMPDNFPSMAQD) is disordered.

The protein localises to the nucleus. Its function is as follows. Transcription factor; part of the gene cluster that mediates the biosynthesis of the 6-methyl-2-pyrone derivative xylariolide D. May play a role in the regulation of the expression of the highly reducing polyketide synthase xilA and the cytochroe P450 monooxygenase xilC. The polypeptide is Transcription factor xilB (Penicillium rubens (strain ATCC 28089 / DSM 1075 / NRRL 1951 / Wisconsin 54-1255) (Penicillium chrysogenum)).